Consider the following 73-residue polypeptide: Putative membrane protein insertion efficiency factor (73 aa).

This sequence belongs to the UPF0161 family.

It is found in the cell inner membrane. Could be involved in insertion of integral membrane proteins into the membrane. In Rickettsia bellii (strain RML369-C), this protein is Putative membrane protein insertion efficiency factor.